Here is a 231-residue protein sequence, read N- to C-terminus: Urease accessory protein UreF (231 aa).

This sequence belongs to the UreF family. UreD, UreF and UreG form a complex that acts as a GTP-hydrolysis-dependent molecular chaperone, activating the urease apoprotein by helping to assemble the nickel containing metallocenter of UreC. The UreE protein probably delivers the nickel.

The protein localises to the cytoplasm. Required for maturation of urease via the functional incorporation of the urease nickel metallocenter. The sequence is that of Urease accessory protein UreF from Marinobacter nauticus (strain ATCC 700491 / DSM 11845 / VT8) (Marinobacter aquaeolei).